The primary structure comprises 390 residues: MKQIAILGSTGSIGVSTLEIVAAHPDKFRVLSLSGAKNLDLLARQIRQFRPRLAAVADPADIPRLKELLSGVEVELTGGVEGLCAAATAPGVQMVVAAIVGAAGLVPTAAAIRAGIDVALANKETLVTAGHLFMELVERHKVKLYPVDSEHSAIFQSIEGHRSQDITKIILTASGGPFRETPLEKLQSVTIQDALNHPNWSMGRKITIDSATMMNKGLEVIEARWLFDAPAEKISVNIHPQSIIHSMVEYIDGCVIAQLGTPDMKAPIAYALSYPERVSTGVKPLDLTELSGLTFSKPDLERFPCLGLAYRALGEGESMPAVMNAANEVAVEAFLDGRISYLQIAALIEKTMDAHQAHRLGSIEEVLEADRWGRATARDICNTLQTGRCL.

NADPH-binding residues include threonine 10, glycine 11, serine 12, isoleucine 13, alanine 36, lysine 37, asparagine 38, and asparagine 122. Residue lysine 123 coordinates 1-deoxy-D-xylulose 5-phosphate. Glutamate 124 provides a ligand contact to NADPH. Aspartate 148 is a Mn(2+) binding site. Residues serine 149, glutamate 150, serine 174, and histidine 197 each coordinate 1-deoxy-D-xylulose 5-phosphate. Mn(2+) is bound at residue glutamate 150. Glycine 203 serves as a coordination point for NADPH. Positions 210, 215, 216, and 219 each coordinate 1-deoxy-D-xylulose 5-phosphate. Glutamate 219 serves as a coordination point for Mn(2+).

This sequence belongs to the DXR family. The cofactor is Mg(2+). Requires Mn(2+) as cofactor.

It carries out the reaction 2-C-methyl-D-erythritol 4-phosphate + NADP(+) = 1-deoxy-D-xylulose 5-phosphate + NADPH + H(+). The protein operates within isoprenoid biosynthesis; isopentenyl diphosphate biosynthesis via DXP pathway; isopentenyl diphosphate from 1-deoxy-D-xylulose 5-phosphate: step 1/6. Functionally, catalyzes the NADPH-dependent rearrangement and reduction of 1-deoxy-D-xylulose-5-phosphate (DXP) to 2-C-methyl-D-erythritol 4-phosphate (MEP). This is 1-deoxy-D-xylulose 5-phosphate reductoisomerase from Trichlorobacter lovleyi (strain ATCC BAA-1151 / DSM 17278 / SZ) (Geobacter lovleyi).